The sequence spans 443 residues: ATP-dependent protease ATPase subunit HslU (443 aa).

ATP-binding positions include I18 and 60-65; that span reads GVGKTE. The segment at 142 to 162 is disordered; sequence LGFEASPSEESNATRQKFRKK. Residues D256, E321, and R393 each contribute to the ATP site.

Belongs to the ClpX chaperone family. HslU subfamily. As to quaternary structure, a double ring-shaped homohexamer of HslV is capped on each side by a ring-shaped HslU homohexamer. The assembly of the HslU/HslV complex is dependent on binding of ATP.

It localises to the cytoplasm. Functionally, ATPase subunit of a proteasome-like degradation complex; this subunit has chaperone activity. The binding of ATP and its subsequent hydrolysis by HslU are essential for unfolding of protein substrates subsequently hydrolyzed by HslV. HslU recognizes the N-terminal part of its protein substrates and unfolds these before they are guided to HslV for hydrolysis. The protein is ATP-dependent protease ATPase subunit HslU of Nitrosomonas europaea (strain ATCC 19718 / CIP 103999 / KCTC 2705 / NBRC 14298).